A 410-amino-acid polypeptide reads, in one-letter code: Cell death protein hid (410 aa).

4 disordered regions span residues methionine 1 to proline 88, phenylalanine 126 to proline 207, asparagine 230 to tryptophan 301, and glutamine 319 to proline 386. Low complexity-rich tracts occupy residues aspartate 13 to serine 27 and serine 35 to serine 70. The segment covering glutamine 71–proline 88 has biased composition (polar residues). Residues proline 134–histidine 145 are compositionally biased toward low complexity. Over residues proline 149–glutamate 159 the composition is skewed to polar residues. A compositionally biased stretch (pro residues) spans glutamine 170–alanine 189. Positions asparagine 230 to alanine 242 are enriched in low complexity. The segment covering glutamate 292–tryptophan 301 has biased composition (basic and acidic residues). Serine 295 carries the post-translational modification Phosphoserine. Polar residues predominate over residues proline 343 to glutamate 358. Residues glutamine 371 to lysine 380 show a composition bias toward basic and acidic residues.

This sequence to D.melanogaster grim and rpr. In terms of assembly, interacts with Diap2 (via BIR2 and BIR3 domains).

Activator of apoptosis, with grim and rpr, that acts on the effector Dredd. Seems to act genetically upstream of baculoviral anti-apoptotic p35. Blocks Diap2 from binding and inactivating the effector caspase Drice. Might regulate apoptosis downstream of Clbn/NEMF. The protein is Cell death protein hid (hid) of Drosophila melanogaster (Fruit fly).